A 511-amino-acid polypeptide reads, in one-letter code: GMP synthase [glutamine-hydrolyzing] (511 aa).

Positions 5–195 (AILVLDFGSQ…VFKICQAQIN (191 aa)) constitute a Glutamine amidotransferase type-1 domain. Catalysis depends on cysteine 82, which acts as the Nucleophile. Active-site residues include histidine 169 and glutamate 171. The GMPS ATP-PPase domain maps to 196-386 (WSLEGNLETI…LGIKKESLYR (191 aa)). 223–229 (SGGTDSL) contributes to the ATP binding site.

Homodimer.

It carries out the reaction XMP + L-glutamine + ATP + H2O = GMP + L-glutamate + AMP + diphosphate + 2 H(+). Its pathway is purine metabolism; GMP biosynthesis; GMP from XMP (L-Gln route): step 1/1. Its function is as follows. Catalyzes the synthesis of GMP from XMP. The polypeptide is GMP synthase [glutamine-hydrolyzing] (guaA) (Borreliella burgdorferi (strain ATCC 35210 / DSM 4680 / CIP 102532 / B31) (Borrelia burgdorferi)).